The chain runs to 101 residues: MPVEPLSQKEIEDRLAELPGWSLDGDRISRSYRLGSHFAAAAMVVHIAQVQEELDHHSDLTLSYHTVSLTVNTHSVGGAVTELDFALARRVEDLAPGHGAS.

This sequence belongs to the pterin-4-alpha-carbinolamine dehydratase family.

The catalysed reaction is (4aS,6R)-4a-hydroxy-L-erythro-5,6,7,8-tetrahydrobiopterin = (6R)-L-erythro-6,7-dihydrobiopterin + H2O. The sequence is that of Putative pterin-4-alpha-carbinolamine dehydratase (dcoH) from Streptomyces avermitilis (strain ATCC 31267 / DSM 46492 / JCM 5070 / NBRC 14893 / NCIMB 12804 / NRRL 8165 / MA-4680).